Reading from the N-terminus, the 338-residue chain is NADPH dehydrogenase (338 aa).

23–26 (SPMC) is a binding site for FMN. Y28 serves as a coordination point for substrate. FMN-binding residues include A60 and Q102. Residue 163-166 (HGAH) participates in substrate binding. Residues R214 and 306-307 (AR) each bind FMN.

Belongs to the NADH:flavin oxidoreductase/NADH oxidase family. NamA subfamily. Homotetramer. FMN serves as cofactor.

It catalyses the reaction A + NADPH + H(+) = AH2 + NADP(+). Its function is as follows. Catalyzes the reduction of the double bond of an array of alpha,beta-unsaturated aldehydes and ketones. It also reduces the nitro group of nitroester and nitroaromatic compounds. It could have a role in detoxification processes. The sequence is that of NADPH dehydrogenase from Halalkalibacterium halodurans (strain ATCC BAA-125 / DSM 18197 / FERM 7344 / JCM 9153 / C-125) (Bacillus halodurans).